The sequence spans 284 residues: MLSKQIPLGIYEKALPAGECWLERLRLAKTLGFDFVEMSVDETDERLSRLDWSREQRLALVNAIVETGVRVPSMCLSAHRRFPLGSEDDAVRAQGLEIMRKAIQFAQDVGIRVIQLAGYDVYYQEANNETRRRFRDGLKESVEMASRAQVTLAMEIMDYPLMNSISKALGYAHYLNNPWFQLYPDIGNLSAWDNDVQMELQAGIGHIVAVHVKDTKPGVFKNVPFGEGVVDFERCFETLKQSGYCGPYLIEMWSETAEDPAAEVAKARDWVKARMAKAGMVEAA.

It belongs to the L-ribulose-5-phosphate 3-epimerase family.

It carries out the reaction L-ribulose 5-phosphate = L-xylulose 5-phosphate. Its pathway is cofactor degradation; L-ascorbate degradation; D-xylulose 5-phosphate from L-ascorbate: step 3/4. In terms of biological role, catalyzes the isomerization of L-xylulose-5-phosphate to L-ribulose-5-phosphate. Is involved in the anaerobic L-ascorbate utilization. This is L-ribulose-5-phosphate 3-epimerase UlaE from Escherichia coli (strain 55989 / EAEC).